Consider the following 300-residue polypeptide: MKIAILSRDGTLYSCKRLREAAIQRGHLVEILDPLSCYMNINPAASSIHYKGRKLPHFDAVIPRIGTAITFYGTAALRQFEMLGSYPLNESVAIARARDKLRSMQLLARQGIDLPVTGIAHSPDDTSDLIDMVGGAPLVVKLVEGTQGIGVVLAETRQAAESVIDAFRGLNAHILVQEYIKEAQGCDIRCLVVGDEVVAAIERRAKEGDFRSNLHRGGAASVASITPQEREIAIKAARTMALDVAGVDILRANRGPLVMEVNASPGLEGIEKTTGIDIASKMIRWIERHATTEYCLKTGG.

One can recognise an ATP-grasp domain in the interval 104 to 287 (MQLLARQGID…IASKMIRWIE (184 aa)). ATP-binding positions include K141, 178 to 179 (EY), D187, and 211 to 213 (RSN). The Mg(2+) site is built by D248, E260, and N262. D248, E260, and N262 together coordinate Mn(2+).

The protein belongs to the RimK family. Mg(2+) serves as cofactor. Mn(2+) is required as a cofactor.

In terms of biological role, an L-glutamate ligase that catalyzes the ATP-dependent post-translational addition of glutamate residues to the C-terminus of ribosomal protein bS6 (RpsF). Is also able to catalyze the synthesis of poly-alpha-glutamate in vitro, via ATP hydrolysis from unprotected glutamate as substrate. The number of glutamate residues added to either RpsF or to poly-alpha-glutamate changes with pH. The sequence is that of Ribosomal protein bS6--L-glutamate ligase from Escherichia coli O81 (strain ED1a).